The sequence spans 225 residues: MTVQRRRRIIKRRRSSVGLALVAAISFLAGMTDAIGLMSIGDFVSFMSGNTTRASVALVQGDAAQGLLLIGGLVSFVLGNAAGVMISIRFRPQAALLFVSALLACAALQEGQPELRFVSLIFAMGAVNASVEQIEGLPVGLTYVTGALSRFGRGLGRWAMGVRNTQWIIQIVPWLGMFAGAIMGAVLVREAGDLALWVPSLAALLLTAAAFQIPRRWQSRFIQSR.

6 helical membrane-spanning segments follow: residues 17–37 (VGLALVAAISFLAGMTDAIGL), 66–86 (GLLLIGGLVSFVLGNAAGVMI), 95–115 (ALLFVSALLACAALQEGQPEL), 117–137 (FVSLIFAMGAVNASVEQIEGL), 168–188 (IIQIVPWLGMFAGAIMGAVLV), and 194–214 (LALWVPSLAALLLTAAAFQIP).

The protein belongs to the UPF0700 family.

The protein resides in the cell membrane. The protein is UPF0700 transmembrane protein RA0705 of Rhizobium meliloti (strain 1021) (Ensifer meliloti).